The sequence spans 296 residues: HTH-type transcriptional regulator IlvR (296 aa).

The HTH lysR-type domain occupies 1–58 (MDIRQFRHFAAVAETLHFGRAAERLGITQPPLSQSIQALEKALGAPLFARTKRHVELT). Residues 18-37 (FGRAAERLGITQPPLSQSIQ) constitute a DNA-binding region (H-T-H motif).

The protein belongs to the LysR transcriptional regulatory family.

Functionally, positively regulates the expression of the ilvD gene while negatively autoregulating its own expression. This Caulobacter vibrioides (strain ATCC 19089 / CIP 103742 / CB 15) (Caulobacter crescentus) protein is HTH-type transcriptional regulator IlvR (ilvR).